Here is a 195-residue protein sequence, read N- to C-terminus: Glycerol-3-phosphate acyltransferase (195 aa).

The next 6 membrane-spanning stretches (helical) occupy residues isoleucine 2–isoleucine 22, isoleucine 54–tyrosine 74, proline 80–phenylalanine 100, glycine 107–isoleucine 127, leucine 132–proline 152, and alanine 155–isoleucine 175.

It belongs to the PlsY family. In terms of assembly, probably interacts with PlsX.

The protein localises to the cell inner membrane. The catalysed reaction is an acyl phosphate + sn-glycerol 3-phosphate = a 1-acyl-sn-glycero-3-phosphate + phosphate. It participates in lipid metabolism; phospholipid metabolism. Catalyzes the transfer of an acyl group from acyl-phosphate (acyl-PO(4)) to glycerol-3-phosphate (G3P) to form lysophosphatidic acid (LPA). This enzyme utilizes acyl-phosphate as fatty acyl donor, but not acyl-CoA or acyl-ACP. This chain is Glycerol-3-phosphate acyltransferase, found in Blochmanniella pennsylvanica (strain BPEN).